Reading from the N-terminus, the 665-residue chain is Potassium-transporting ATPase ATP-binding subunit (665 aa).

4 helical membrane passes run 28–48 (MFLT…PGFF), 56–76 (YLQF…FSSM), 207–227 (IALT…TASI), and 244–264 (IVLL…AIGI). Residue Asp295 is the 4-aspartylphosphate intermediate of the active site. ATP is bound by residues Asp332, Glu336, 364-371 (FSSETKYS), and Lys382. Mg(2+)-binding residues include Asp501 and Asp505. 3 consecutive transmembrane segments (helical) span residues 570–590 (YFVI…VNVL), 596–616 (IVAV…LIPL), and 644–664 (VVVP…LGVV).

The protein belongs to the cation transport ATPase (P-type) (TC 3.A.3) family. Type IA subfamily. As to quaternary structure, the system is composed of three essential subunits: KdpA, KdpB and KdpC.

The protein localises to the cell membrane. It catalyses the reaction K(+)(out) + ATP + H2O = K(+)(in) + ADP + phosphate + H(+). Part of the high-affinity ATP-driven potassium transport (or Kdp) system, which catalyzes the hydrolysis of ATP coupled with the electrogenic transport of potassium into the cytoplasm. This subunit is responsible for energy coupling to the transport system and for the release of the potassium ions to the cytoplasm. The polypeptide is Potassium-transporting ATPase ATP-binding subunit (Thermoplasma acidophilum (strain ATCC 25905 / DSM 1728 / JCM 9062 / NBRC 15155 / AMRC-C165)).